The primary structure comprises 250 residues: Adenosine 5'-phosphosulfate reductase (250 aa).

[4Fe-4S] cluster contacts are provided by Cys-119, Cys-120, Cys-202, and Cys-205. Cys-230 acts as the Nucleophile; cysteine thiosulfonate intermediate in catalysis.

The protein belongs to the PAPS reductase family. CysH subfamily. [4Fe-4S] cluster is required as a cofactor.

It is found in the cytoplasm. The catalysed reaction is [thioredoxin]-disulfide + sulfite + AMP + 2 H(+) = adenosine 5'-phosphosulfate + [thioredoxin]-dithiol. Its pathway is sulfur metabolism; hydrogen sulfide biosynthesis; sulfite from sulfate. Catalyzes the formation of sulfite from adenosine 5'-phosphosulfate (APS) using thioredoxin as an electron donor. The protein is Adenosine 5'-phosphosulfate reductase of Burkholderia cepacia (Pseudomonas cepacia).